The sequence spans 54 residues: Ovomucoid (54 aa).

The Kazal-like domain maps to 4 to 54; the sequence is VDCSDYPKPACTLEYMPLCGSDNKTYGNRCNFCNAVVDSNGTLTLSHFGKC. 3 cysteine pairs are disulfide-bonded: C6/C36, C14/C33, and C22/C54. N-linked (GlcNAc...) asparagine glycosylation is present at N43.

The protein resides in the secreted. The chain is Ovomucoid from Dendrocygna viduata (White-faced whistling-duck).